Here is a 598-residue protein sequence, read N- to C-terminus: MDSYDLFRRLGAGAKFDVKRFSADATRFQVGKRKFGSDSSETVKGLDFFGNKKSVSDECGGLQTQQELQNEETTEGGLLERSKEPKKKKRKKMTADVPAQEDLDGTIQWTSSVEAKLQDKKANGEKKLTSEKLEHLRKEKINFFRNKHKIHVQGTDLPDPIATFQQLDQEYKISPRLLQNILDAGFQVPTPIQMQAIPVMLHGRELLASAPTGSGKTLAFSIPILMQLKQPTNKGFRALVISPTRELASQIHRELIKISEGTGFRIHMIHKAAIAAKKFGPKSSKKFDILVTTPNRLIYLLKQEPPGIDLTSVEWLVVDESDKLFEDGKTGFRDQLASIFLACTSPKVRRAMFSATFAYDVEQWCKLNLDNIVSVSIGARNSAVETVEQELLFVGSETGKLLAMRELVKKGFNPPVLVFVQSIERAKELFHELIYEGINVDVIHAERTQQQRDNTVHSFRAGKIWVLICTALLARGIDFKGVNLVINYDFPTSSVEYIHRIGRTGRAGNRGKAVTFFTEDDKPLLRSVANVIQQAGCPVPEYIKGFQKLLSKQKKKMIKKPLERESISTTPKYFLEQAKQKKVAGQNSKKKETLKGKS.

Position 15 is an N6-acetyllysine (Lys15). A Phosphoserine modification is found at Ser39. The interval 59 to 98 (CGGLQTQQELQNEETTEGGLLERSKEPKKKKRKKMTADVP) is disordered. The Q motif signature appears at 166-194 (QLDQEYKISPRLLQNILDAGFQVPTPIQM). Residues 197-375 (IPVMLHGREL…KLNLDNIVSV (179 aa)) enclose the Helicase ATP-binding domain. 210–217 (APTGSGKT) lines the ATP pocket. The short motif at 319–322 (DESD) is the DEAD box element. Residues 386 to 547 (TVEQELLFVG…PVPEYIKGFQ (162 aa)) form the Helicase C-terminal domain. The segment at 578–598 (AKQKKVAGQNSKKKETLKGKS) is disordered. Residues 589–598 (KKKETLKGKS) are compositionally biased toward basic and acidic residues.

This sequence belongs to the DEAD box helicase family. DDX52/ROK1 subfamily.

The protein resides in the nucleus. It is found in the nucleolus. The catalysed reaction is ATP + H2O = ADP + phosphate + H(+). Functionally, required for efficient ribosome biogenesis. May control cell cycle progression by regulating translation of mRNAs that contain a terminal oligo pyrimidine (TOP) motif in their 5' UTRs, such as GTPBP4. The polypeptide is Probable ATP-dependent RNA helicase DDX52 (Ddx52) (Rattus norvegicus (Rat)).